A 410-amino-acid chain; its full sequence is Dual-specificity RNA methyltransferase RlmN (410 aa).

Residue glutamate 123 is the Proton acceptor of the active site. The Radical SAM core domain maps to 129 to 378 (EEGRGTLCIS…IRTPRGRDIL (250 aa)). A disulfide bridge connects residues cysteine 136 and cysteine 381. Positions 143, 147, and 150 each coordinate [4Fe-4S] cluster. S-adenosyl-L-methionine contacts are provided by residues 207–208 (GE), serine 239, 261–263 (SLH), and asparagine 338. The active-site S-methylcysteine intermediate is cysteine 381.

This sequence belongs to the radical SAM superfamily. RlmN family. The cofactor is [4Fe-4S] cluster.

The protein localises to the cytoplasm. It catalyses the reaction adenosine(2503) in 23S rRNA + 2 reduced [2Fe-2S]-[ferredoxin] + 2 S-adenosyl-L-methionine = 2-methyladenosine(2503) in 23S rRNA + 5'-deoxyadenosine + L-methionine + 2 oxidized [2Fe-2S]-[ferredoxin] + S-adenosyl-L-homocysteine. The catalysed reaction is adenosine(37) in tRNA + 2 reduced [2Fe-2S]-[ferredoxin] + 2 S-adenosyl-L-methionine = 2-methyladenosine(37) in tRNA + 5'-deoxyadenosine + L-methionine + 2 oxidized [2Fe-2S]-[ferredoxin] + S-adenosyl-L-homocysteine. Its function is as follows. Specifically methylates position 2 of adenine 2503 in 23S rRNA and position 2 of adenine 37 in tRNAs. m2A2503 modification seems to play a crucial role in the proofreading step occurring at the peptidyl transferase center and thus would serve to optimize ribosomal fidelity. The protein is Dual-specificity RNA methyltransferase RlmN of Mesorhizobium japonicum (strain LMG 29417 / CECT 9101 / MAFF 303099) (Mesorhizobium loti (strain MAFF 303099)).